A 173-amino-acid polypeptide reads, in one-letter code: DELTA-actitoxin-Oor1b (173 aa).

Residues 6–25 (GAALGFNVHQTVLKALGQVS) form an N-terminal region region. Positions 49, 82, 100, 102, 128, and 133 each coordinate phosphocholine. Positions 100–115 (SVPFDYNLYSNWWDVK) are trp-rich region, which is important for the binding to lipid membrane.

This sequence belongs to the actinoporin family. Sea anemone subfamily. Octamer or nonamer in membranes. Monomer in the soluble state.

It is found in the secreted. Its subcellular location is the nematocyst. It localises to the target cell membrane. In terms of biological role, pore-forming protein that forms cations-selective hydrophilic pores of around 1 nm and causes cardiac stimulation and cytolysis. Pore formation is a multi-step process that involves specific recognition of membrane sphingomyelin (but neither cholesterol nor phosphatidylcholine) using aromatic rich region and adjacent phosphocholine (POC) binding site, firm binding to the membrane (mainly driven by hydrophobic interactions) accompanied by the transfer of the N-terminal region to the lipid-water interface and finally pore formation after oligomerization of monomers. Cytolytic effects include red blood cells hemolysis, platelet aggregation and lysis, cytotoxic and cytostatic effects on fibroblasts. Lethality in mammals has been ascribed to severe vasospasm of coronary vessels, cardiac arrhythmia, and inotropic effects. The sequence is that of DELTA-actitoxin-Oor1b from Oulactis orientalis (Japan anemone).